Here is a 332-residue protein sequence, read N- to C-terminus: Azadirone synthase LFS (332 aa).

Residues 181–286 (ANANYTNMFH…RYSTGTFICP (106 aa)) enclose the Fe2OG dioxygenase domain. The Fe cation site is built by His-208, Asp-210, and His-269. Arg-277 provides a ligand contact to 2-oxoglutarate.

Belongs to the iron/ascorbate-dependent oxidoreductase family. Fe(2+) serves as cofactor. As to expression, mainly expressed in petioles and, to a lower extent, in roots.

The catalysed reaction is (1S,3bR,4R,5aR,9aR,9bR,11aS)-1-(1-hydroxy-4-oxobutan-2-yl)-3b,6,6,9a,11a-pentamethyl-7-oxo-1H,2H,3bH,4H,5H,5aH,6H,7H,9aH,9bH,10H,11H,11aH-cyclopenta[a]phenanthren-4-yl acetate + 2-oxoglutarate + O2 = azadirone + succinate + CO2 + 2 H2O. Its pathway is secondary metabolite biosynthesis; terpenoid biosynthesis. 2-oxoglutarate-Fe(II) type oxidoreductase involved in the biosynthesis of limonoids triterpene natural products such as azadirachtin, an antifeedant widely used as bioinsecticide, and possessing many medicinal applications including anti-tumoral, anti-malarial, anti-rheumatic, antibacterial, anti-inflammatory, anti-pyretic and diuretic effects. Catalyzes the formation of azadirone. The polypeptide is Azadirone synthase LFS (Melia azedarach (Chinaberry tree)).